The primary structure comprises 31 residues: Dermaseptin-DI3 (31 aa).

It belongs to the frog skin active peptide (FSAP) family. Dermaseptin subfamily. As to expression, expressed by the skin glands.

The protein resides in the secreted. Functionally, antibacterial activity against Gram-positive bacteria S.aureus and E.faecalis, and Gram-negative bacteria P.aeruginosa and E.coli. The polypeptide is Dermaseptin-DI3 (Phyllomedusa distincta (Monkey frog)).